The sequence spans 190 residues: A-type ATP synthase subunit E (190 aa).

This sequence belongs to the V-ATPase E subunit family. Has multiple subunits with at least A(3), B(3), C, D, E, F, H, I and proteolipid K(x).

It is found in the cell membrane. Its function is as follows. Component of the A-type ATP synthase that produces ATP from ADP in the presence of a proton gradient across the membrane. The protein is A-type ATP synthase subunit E of Pyrobaculum islandicum (strain DSM 4184 / JCM 9189 / GEO3).